Consider the following 262-residue polypeptide: Acyl-[acyl-carrier-protein]--UDP-N-acetylglucosamine O-acyltransferase (262 aa).

This sequence belongs to the transferase hexapeptide repeat family. LpxA subfamily. In terms of assembly, homotrimer.

Its subcellular location is the cytoplasm. It carries out the reaction a (3R)-hydroxyacyl-[ACP] + UDP-N-acetyl-alpha-D-glucosamine = a UDP-3-O-[(3R)-3-hydroxyacyl]-N-acetyl-alpha-D-glucosamine + holo-[ACP]. Its pathway is glycolipid biosynthesis; lipid IV(A) biosynthesis; lipid IV(A) from (3R)-3-hydroxytetradecanoyl-[acyl-carrier-protein] and UDP-N-acetyl-alpha-D-glucosamine: step 1/6. In terms of biological role, involved in the biosynthesis of lipid A, a phosphorylated glycolipid that anchors the lipopolysaccharide to the outer membrane of the cell. The chain is Acyl-[acyl-carrier-protein]--UDP-N-acetylglucosamine O-acyltransferase from Histophilus somni (strain 2336) (Haemophilus somnus).